The chain runs to 232 residues: 5'-methylthioadenosine/S-adenosylhomocysteine nucleosidase (232 aa).

The active-site Proton acceptor is Glu12. Substrate is bound by residues Gly78, Ile152, and 173–174 (ME). Residue Asp197 is the Proton donor of the active site.

This sequence belongs to the PNP/UDP phosphorylase family. MtnN subfamily. In terms of assembly, homodimer.

The catalysed reaction is S-adenosyl-L-homocysteine + H2O = S-(5-deoxy-D-ribos-5-yl)-L-homocysteine + adenine. It carries out the reaction S-methyl-5'-thioadenosine + H2O = 5-(methylsulfanyl)-D-ribose + adenine. It catalyses the reaction 5'-deoxyadenosine + H2O = 5-deoxy-D-ribose + adenine. It functions in the pathway amino-acid biosynthesis; L-methionine biosynthesis via salvage pathway; S-methyl-5-thio-alpha-D-ribose 1-phosphate from S-methyl-5'-thioadenosine (hydrolase route): step 1/2. In terms of biological role, catalyzes the irreversible cleavage of the glycosidic bond in both 5'-methylthioadenosine (MTA) and S-adenosylhomocysteine (SAH/AdoHcy) to adenine and the corresponding thioribose, 5'-methylthioribose and S-ribosylhomocysteine, respectively. Also cleaves 5'-deoxyadenosine, a toxic by-product of radical S-adenosylmethionine (SAM) enzymes, into 5-deoxyribose and adenine. Thus, is required for in vivo function of the radical SAM enzymes biotin synthase and lipoic acid synthase, that are inhibited by 5'-deoxyadenosine accumulation. The sequence is that of 5'-methylthioadenosine/S-adenosylhomocysteine nucleosidase from Salmonella dublin (strain CT_02021853).